The following is a 273-amino-acid chain: Large ribosomal subunit protein uL2 (273 aa).

The disordered stretch occupies residues Val-228–Lys-273. A compositionally biased stretch (basic residues) spans Lys-254–Lys-273.

The protein belongs to the universal ribosomal protein uL2 family. As to quaternary structure, part of the 50S ribosomal subunit. Forms a bridge to the 30S subunit in the 70S ribosome.

One of the primary rRNA binding proteins. Required for association of the 30S and 50S subunits to form the 70S ribosome, for tRNA binding and peptide bond formation. It has been suggested to have peptidyltransferase activity; this is somewhat controversial. Makes several contacts with the 16S rRNA in the 70S ribosome. The protein is Large ribosomal subunit protein uL2 of Rickettsia akari (strain Hartford).